Consider the following 105-residue polypeptide: Multidrug resistance protein EbrA (105 aa).

Transmembrane regions (helical) follow at residues 2-22, 35-55, 57-77, and 84-104; these read LVGY…AAML, ALVV…LNHI, LSLS…VIGV, and LNAK…LLNW.

The protein belongs to the drug/metabolite transporter (DMT) superfamily. Small multidrug resistance (SMR) (TC 2.A.7.1) family. EbrA/EbrB subfamily. The efflux pump is composed of EbrA and EbrB.

Its subcellular location is the cell membrane. Part of a multidrug efflux pump. Confers resistance to cationic lipophilic dyes such as ethidium bromide, acriflavine, pyronine Y and safranin O. The efflux is probably coupled to an influx of protons. This Bacillus atrophaeus protein is Multidrug resistance protein EbrA (ebrA).